Consider the following 988-residue polypeptide: Protein SEMI-ROLLED LEAF 2 (988 aa).

The segment at 844–865 (SVDGGLHESPITNTGSSISKTT) is disordered. Polar residues predominate over residues 853–865 (PITNTGSSISKTT).

In terms of tissue distribution, expressed in root tips, and in the vascular bundles of leaf blades, leaf sheaths, and roots, especially in their sclerenchymatous cells.

Its subcellular location is the nucleus. The protein resides in the cytoplasm. Functions in regulating leaf rolling through abaxial side leaf cell differentiation. May be involved in the transdifferentiation process from mesophyll cells to sclerenchymatous cells. In Oryza sativa subsp. japonica (Rice), this protein is Protein SEMI-ROLLED LEAF 2.